Reading from the N-terminus, the 127-residue chain is uncharacterized protein (127 aa).

Thr-30 carries the phosphothreonine modification. Residues 51-75 (APTYEQVLYPPASQKKTSNSTSEES) form a disordered region. Ser-63 is subject to Phosphoserine.

This is an uncharacterized protein from Mus musculus (Mouse).